Consider the following 291-residue polypeptide: Inactive dihydropteroate synthase 2 (291 aa).

The 258-residue stretch at 15-272 (QLIMAIVNRT…EVVATRRVLE (258 aa)) folds into the Pterin-binding domain.

It belongs to the DHPS family. As to quaternary structure, homodimer.

In terms of biological role, has very low affinity for the DHPS substrate 6-hydroxymethyl-7,8-dihydropterin-pyrophosphate, but can bind the inhibitor dapsone. Seems to lack dihydropteroate synthase activity, and does probably not function in folate metabolism. In Mycobacterium leprae (strain TN), this protein is Inactive dihydropteroate synthase 2 (folP2).